Here is a 266-residue protein sequence, read N- to C-terminus: Beta-lactamase OXA-20 (266 aa).

The first 21 residues, 1-21 (MIIRFLALLFSAVVLVSLGHA), serve as a signal peptide directing secretion. The active-site Acyl-ester intermediate is serine 72. The residue at position 75 (lysine 75) is an N6-carboxylysine. 210 to 212 (KTG) is a substrate binding site.

Belongs to the class-D beta-lactamase family.

The catalysed reaction is a beta-lactam + H2O = a substituted beta-amino acid. With respect to regulation, inhibited by clavulanic acid. This is an oxacillin-hydrolyzing beta-lactamase. In Pseudomonas aeruginosa, this protein is Beta-lactamase OXA-20 (bla).